Consider the following 456-residue polypeptide: UDP-N-acetylglucosamine 1-carboxyvinyltransferase (456 aa).

34 to 35 serves as a coordination point for phosphoenolpyruvate; it reads KN. R104 is a UDP-N-acetyl-alpha-D-glucosamine binding site. C128 acts as the Proton donor in catalysis. C128 carries the 2-(S-cysteinyl)pyruvic acid O-phosphothioketal modification. UDP-N-acetyl-alpha-D-glucosamine is bound by residues D319 and I341.

This sequence belongs to the EPSP synthase family. MurA subfamily.

It is found in the cytoplasm. It carries out the reaction phosphoenolpyruvate + UDP-N-acetyl-alpha-D-glucosamine = UDP-N-acetyl-3-O-(1-carboxyvinyl)-alpha-D-glucosamine + phosphate. It participates in cell wall biogenesis; peptidoglycan biosynthesis. Functionally, cell wall formation. Adds enolpyruvyl to UDP-N-acetylglucosamine. This Prochlorococcus marinus (strain AS9601) protein is UDP-N-acetylglucosamine 1-carboxyvinyltransferase.